Consider the following 130-residue polypeptide: Small ribosomal subunit protein uS9 (130 aa).

The interval 111-130 (KERRKYGLKKARKAPQFSKR) is disordered.

It belongs to the universal ribosomal protein uS9 family.

The sequence is that of Small ribosomal subunit protein uS9 from Thermoanaerobacter sp. (strain X514).